The primary structure comprises 204 residues: Phosphoribosyl-dephospho-CoA transferase (204 aa).

Catalysis depends on residues Asp-129 and Asp-131.

It belongs to the MdcG family.

It carries out the reaction apo-[malonate decarboxylase ACP] + 2'-(5''-triphospho-alpha-D-ribosyl)-3'-dephospho-CoA = holo-[malonate decarboxylase ACP] + diphosphate. In terms of biological role, transfers 2'-(5-triphosphoribosyl)-3'-dephosphocoenzyme-A to the apo-[acyl-carrier-protein] of the malonate decarboxylase to yield holo-[acyl-carrier-protein]. This is Phosphoribosyl-dephospho-CoA transferase from Pseudomonas putida (strain GB-1).